Here is a 343-residue protein sequence, read N- to C-terminus: Cytoplasmic tRNA 2-thiolation protein 1 (343 aa).

It belongs to the TtcA family. CTU1/NCS6/ATPBD3 subfamily.

Its subcellular location is the cytoplasm. The protein operates within tRNA modification; 5-methoxycarbonylmethyl-2-thiouridine-tRNA biosynthesis. Its function is as follows. Plays a central role in 2-thiolation of mcm(5)S(2)U at tRNA wobble positions of tRNA(Lys), tRNA(Glu) and tRNA(Gln). Directly binds tRNAs and probably acts by catalyzing adenylation of tRNAs, an intermediate required for 2-thiolation. It is unclear whether it acts as a sulfurtransferase that transfers sulfur from thiocarboxylated URM1 onto the uridine of tRNAs at wobble position. The sequence is that of Cytoplasmic tRNA 2-thiolation protein 1 from Drosophila erecta (Fruit fly).